Reading from the N-terminus, the 442-residue chain is UPF0489 protein C5orf22 (442 aa).

Residues 175 to 210 are disordered; sequence SSAKKPKLALEDSENTASTNCDSSSEGLEKDTATQR. The span at 189–200 shows a compositional bias: polar residues; that stretch reads NTASTNCDSSSE.

It belongs to the UPF0489 family.

This is UPF0489 protein C5orf22 (C5orf22) from Homo sapiens (Human).